A 216-amino-acid chain; its full sequence is Transmembrane emp24 domain-containing protein p24delta5 (216 aa).

The first 27 residues, 1 to 27 (MAINRIAHGSLFLTVVLFFLTVNYGEA), serve as a signal peptide directing secretion. At 28–183 (IWLTIPTTGG…REVSETTNSR (156 aa)) the chain is on the lumenal side. Positions 38–151 (TKCVSEEIQS…IEGVELQLRR (114 aa)) constitute a GOLD domain. The N-linked (GlcNAc...) asparagine glycan is linked to Asn86. Residues 137–159 (AKKEKIEGVELQLRRLEGLVLSI) are a coiled coil. Residues Arg169 and Arg174 each carry the omega-N-methylated arginine modification. The helical transmembrane segment at 184–204 (VAWFSIMSLGVCVVVVGSQIL) threads the bilayer. Over 205-216 (YLKRYFHKKKLI) the chain is Cytoplasmic. The short motif at 209–210 (YF) is the COPII vesicle coat-binding element. The COPI vesicle coat-binding signature appears at 209-216 (YFHKKKLI).

This sequence belongs to the EMP24/GP25L family. As to quaternary structure, probably oligomerizes with other members of the EMP24/GP25L family. Associates with the COPI vesicle coat (coatomer). Associates with the COPII vesicle coat (coatomer). Interacts with p24beta2.

Its subcellular location is the endoplasmic reticulum membrane. Its function is as follows. Involved in vesicular protein trafficking. Mainly functions in the early secretory pathway. Thought to act as cargo receptor at the lumenal side for incorporation of secretory cargo molecules into transport vesicles and to be involved in vesicle coat formation at the cytoplasmic side. Interacts with p24beta2 at endoplasmic reticulum export sites for endoplasmic reticulum exit and coupled transport to the Golgi apparatus. Once in the Golgi, interacts very efficiently with the COPI machinery for retrograde transport back to the endoplasmic reticulum. This chain is Transmembrane emp24 domain-containing protein p24delta5, found in Arabidopsis thaliana (Mouse-ear cress).